We begin with the raw amino-acid sequence, 267 residues long: Tryptophan synthase alpha chain (267 aa).

Active-site proton acceptor residues include Glu-47 and Asp-58.

Belongs to the TrpA family. As to quaternary structure, tetramer of two alpha and two beta chains.

It carries out the reaction (1S,2R)-1-C-(indol-3-yl)glycerol 3-phosphate + L-serine = D-glyceraldehyde 3-phosphate + L-tryptophan + H2O. It participates in amino-acid biosynthesis; L-tryptophan biosynthesis; L-tryptophan from chorismate: step 5/5. In terms of biological role, the alpha subunit is responsible for the aldol cleavage of indoleglycerol phosphate to indole and glyceraldehyde 3-phosphate. In Chlorobium limicola (strain DSM 245 / NBRC 103803 / 6330), this protein is Tryptophan synthase alpha chain.